A 145-amino-acid chain; its full sequence is Large ribosomal subunit protein uL15 (145 aa).

The segment at 1 to 50 is disordered; it reads MRLNTLSPAAGSKPEKQRRGRGIGSGLGKTGGRGVKGQTSRSGGGKVRAG. The segment covering 22–35 has biased composition (gly residues); the sequence is GIGSGLGKTGGRGV.

The protein belongs to the universal ribosomal protein uL15 family. As to quaternary structure, part of the 50S ribosomal subunit.

Its function is as follows. Binds to the 23S rRNA. The protein is Large ribosomal subunit protein uL15 of Aeromonas salmonicida (strain A449).